Reading from the N-terminus, the 274-residue chain is Momilactone A synthase (274 aa).

The protein belongs to the short-chain dehydrogenases/reductases (SDR) family.

It carries out the reaction 3beta-hydroxy-9beta-pimara-7,15-dien-19,6beta-olide + NAD(+) = momilactone A + NADH + H(+). The catalysed reaction is 3beta-hydroxy-9beta-pimara-7,15-dien-19,6beta-olide + NADP(+) = momilactone A + NADPH + H(+). In terms of biological role, involved in momilactone phytoalexins biosynthesis. Catalyzes the last step of momilactone A biosynthesis. This chain is Momilactone A synthase, found in Oryza sativa subsp. japonica (Rice).